The sequence spans 801 residues: PR domain zinc finger protein 4 (801 aa).

The 118-residue stretch at 412-529 (KQLVLRQSIV…PENELLFYYS (118 aa)) folds into the SET domain. The segment at 545-566 (HLCNCGKECNSYTEFKAHLTSH) adopts a C2H2-type 1; atypical zinc-finger fold. 4 consecutive C2H2-type zinc fingers follow at residues 618 to 640 (HKCDFCSKAFSDPSNLRTHLKIH), 646 to 668 (YRCTLCDKSFTQKAHLESHMVIH), 674 to 696 (LKCDYCDKLFMRRQDLKQHVLIH), and 702 to 724 (IKCPKCDKLFLRTNHLKKHLNSH). The C2H2-type 6; atypical zinc-finger motif lies at 730-752 (YVCEKCTKAYLTKYHLTRHLKTC). The tract at residues 751–782 (TCKGPTSSSSAPEEEEEDDSEEEDLADSVGTE) is disordered. Over residues 762-776 (PEEEEEDDSEEEDLA) the composition is skewed to acidic residues.

This sequence belongs to the class V-like SAM-binding methyltransferase superfamily. As to expression, expressed in many tissues. Highly expressed in ovary, testis, pancreas, brain, heart and prostate.

The protein localises to the nucleus. Functionally, may function as a transcription factor involved in cell differentiation. The polypeptide is PR domain zinc finger protein 4 (PRDM4) (Homo sapiens (Human)).